The following is a 137-amino-acid chain: NADPH-dependent 7-cyano-7-deazaguanine reductase (137 aa).

Catalysis depends on cysteine 50, which acts as the Thioimide intermediate. Aspartate 57 acts as the Proton donor in catalysis. Substrate is bound by residues 72–74 and 91–92; these read VEL and HE.

It belongs to the GTP cyclohydrolase I family. QueF type 1 subfamily.

Its subcellular location is the cytoplasm. The catalysed reaction is 7-aminomethyl-7-carbaguanine + 2 NADP(+) = 7-cyano-7-deazaguanine + 2 NADPH + 3 H(+). Its pathway is tRNA modification; tRNA-queuosine biosynthesis. Catalyzes the NADPH-dependent reduction of 7-cyano-7-deazaguanine (preQ0) to 7-aminomethyl-7-deazaguanine (preQ1). The polypeptide is NADPH-dependent 7-cyano-7-deazaguanine reductase (Synechocystis sp. (strain ATCC 27184 / PCC 6803 / Kazusa)).